The sequence spans 432 residues: Gamma-glutamyl phosphate reductase (432 aa).

Belongs to the gamma-glutamyl phosphate reductase family.

The protein localises to the cytoplasm. It catalyses the reaction L-glutamate 5-semialdehyde + phosphate + NADP(+) = L-glutamyl 5-phosphate + NADPH + H(+). The protein operates within amino-acid biosynthesis; L-proline biosynthesis; L-glutamate 5-semialdehyde from L-glutamate: step 2/2. Its function is as follows. Catalyzes the NADPH-dependent reduction of L-glutamate 5-phosphate into L-glutamate 5-semialdehyde and phosphate. The product spontaneously undergoes cyclization to form 1-pyrroline-5-carboxylate. This chain is Gamma-glutamyl phosphate reductase, found in Clavibacter michiganensis subsp. michiganensis (strain NCPPB 382).